We begin with the raw amino-acid sequence, 248 residues long: 4-hydroxy-tetrahydrodipicolinate reductase (248 aa).

NAD(+) is bound by residues 9 to 14, 77 to 79, and 104 to 107; these read GAKGRV, GTT, and APNF. The active-site Proton donor/acceptor is H134. Residue H135 coordinates (S)-2,3,4,5-tetrahydrodipicolinate. K138 (proton donor) is an active-site residue. 144-145 lines the (S)-2,3,4,5-tetrahydrodipicolinate pocket; it reads GT.

This sequence belongs to the DapB family.

The protein localises to the cytoplasm. The enzyme catalyses (S)-2,3,4,5-tetrahydrodipicolinate + NAD(+) + H2O = (2S,4S)-4-hydroxy-2,3,4,5-tetrahydrodipicolinate + NADH + H(+). It catalyses the reaction (S)-2,3,4,5-tetrahydrodipicolinate + NADP(+) + H2O = (2S,4S)-4-hydroxy-2,3,4,5-tetrahydrodipicolinate + NADPH + H(+). The protein operates within amino-acid biosynthesis; L-lysine biosynthesis via DAP pathway; (S)-tetrahydrodipicolinate from L-aspartate: step 4/4. Catalyzes the conversion of 4-hydroxy-tetrahydrodipicolinate (HTPA) to tetrahydrodipicolinate. The polypeptide is 4-hydroxy-tetrahydrodipicolinate reductase (Corynebacterium glutamicum (strain ATCC 13032 / DSM 20300 / JCM 1318 / BCRC 11384 / CCUG 27702 / LMG 3730 / NBRC 12168 / NCIMB 10025 / NRRL B-2784 / 534)).